The following is a 468-amino-acid chain: Citrate synthase, mitochondrial (468 aa).

The N-terminal 30 residues, 1–30 (MSLITAGRLCARILGAKNSPCALIAARQAS), are a transit peptide targeting the mitochondrion. Residues His-303 and His-349 contribute to the active site. An oxaloacetate-binding site is contributed by Arg-358. Asp-404 is an active-site residue. Residues Arg-430 and Arg-450 each contribute to the oxaloacetate site.

Belongs to the citrate synthase family. In terms of assembly, homodimer.

The protein resides in the mitochondrion matrix. The catalysed reaction is oxaloacetate + acetyl-CoA + H2O = citrate + CoA + H(+). The protein operates within carbohydrate metabolism; tricarboxylic acid cycle; isocitrate from oxaloacetate: step 1/2. Key enzyme of the Krebs tricarboxylic acid cycle which catalyzes the synthesis of citrate from acetyl coenzyme A and oxaloacetate. This Xenopus tropicalis (Western clawed frog) protein is Citrate synthase, mitochondrial (cs).